The primary structure comprises 161 residues: Urease accessory protein UreE (161 aa).

Residues E133–S161 are disordered.

It belongs to the UreE family.

It localises to the cytoplasm. Functionally, involved in urease metallocenter assembly. Binds nickel. Probably functions as a nickel donor during metallocenter assembly. The chain is Urease accessory protein UreE from Pseudomonas putida (strain W619).